A 1238-amino-acid polypeptide reads, in one-letter code: Kinesin-related protein 10 (1238 aa).

The Kinesin motor domain maps to 16–374 (SMIVTVRIRP…LKYAQRAKSI (359 aa)). An ATP-binding site is contributed by 116 to 123 (GASGAGKT). Over residues 417–436 (NNNNSNNNNNNNNNNYFSNS) the composition is skewed to low complexity. The interval 417-503 (NNNNSNNNNN…DGEDSNNRDN (87 aa)) is disordered. Positions 437-464 (FGSCGNKNQPIKQPTPPTSLFHQQNQKY) are enriched in polar residues. Residues 468–497 (DDDDDDDNDQEENNDEVLINEDDEEVDGED) show a composition bias toward acidic residues. Residues 527 to 602 (TLKKTQSIQR…NNQWRRKLQS (76 aa)) are a coiled coil. Low complexity-rich tracts occupy residues 726-795 (NDIN…NIIN), 918-934 (LLPS…SSPL), and 961-971 (NNNNNNNNIAP). 4 disordered regions span residues 726–802 (NDIN…LKPR), 891–971 (EIDD…NIAP), 1134–1156 (TPTS…TTST), and 1191–1238 (ATLT…KIIK). The span at 1191–1203 (ATLTPNRNNSQIV) shows a compositional bias: polar residues. The segment covering 1215–1228 (PTSSSSRLLPSSRT) has biased composition (low complexity). A compositionally biased stretch (polar residues) spans 1229 to 1238 (TVNTSRKIIK).

It belongs to the TRAFAC class myosin-kinesin ATPase superfamily. Kinesin family.

It localises to the cytoplasm. The protein resides in the cytoskeleton. In terms of biological role, microtubule-associated force-producing protein that plays a role in organelle transport. Its motor activity is directed toward the microtubule's plus end. Cooperates with kif8 and dynein to organize interphase microtubules. The protein is Kinesin-related protein 10 (kif10) of Dictyostelium discoideum (Social amoeba).